The chain runs to 280 residues: 4-diphosphocytidyl-2-C-methyl-D-erythritol kinase (280 aa).

Lys-8 is a catalytic residue. Residue 91-101 (PVAAGLAGGST) coordinates ATP. Asp-133 is an active-site residue.

The protein belongs to the GHMP kinase family. IspE subfamily.

The enzyme catalyses 4-CDP-2-C-methyl-D-erythritol + ATP = 4-CDP-2-C-methyl-D-erythritol 2-phosphate + ADP + H(+). Its pathway is isoprenoid biosynthesis; isopentenyl diphosphate biosynthesis via DXP pathway; isopentenyl diphosphate from 1-deoxy-D-xylulose 5-phosphate: step 3/6. Catalyzes the phosphorylation of the position 2 hydroxy group of 4-diphosphocytidyl-2C-methyl-D-erythritol. This chain is 4-diphosphocytidyl-2-C-methyl-D-erythritol kinase, found in Clostridium botulinum (strain ATCC 19397 / Type A).